The chain runs to 156 residues: Cytochrome c-type biogenesis protein CcmE (156 aa).

At 1 to 16 the chain is on the cytoplasmic side; that stretch reads MNATKAPGGIKPKHQR. The chain crosses the membrane as a helical; Signal-anchor for type II membrane protein span at residues 17-37; that stretch reads LVLLVIALVALIGAGLLAAYA. Residues 38–156 lie on the Periplasmic side of the membrane; the sequence is LSNQASYFYV…QAEAVVAETK (119 aa). Positions 131 and 135 each coordinate heme.

The protein belongs to the CcmE/CycJ family.

It localises to the cell inner membrane. Functionally, heme chaperone required for the biogenesis of c-type cytochromes. Transiently binds heme delivered by CcmC and transfers the heme to apo-cytochromes in a process facilitated by CcmF and CcmH. This Novosphingobium aromaticivorans (strain ATCC 700278 / DSM 12444 / CCUG 56034 / CIP 105152 / NBRC 16084 / F199) protein is Cytochrome c-type biogenesis protein CcmE.